The primary structure comprises 99 residues: Small ribosomal subunit protein uS14 (99 aa).

This sequence belongs to the universal ribosomal protein uS14 family. In terms of assembly, part of the 30S ribosomal subunit. Contacts proteins S3 and S10.

In terms of biological role, binds 16S rRNA, required for the assembly of 30S particles and may also be responsible for determining the conformation of the 16S rRNA at the A site. The chain is Small ribosomal subunit protein uS14 from Bacteroides fragilis (strain ATCC 25285 / DSM 2151 / CCUG 4856 / JCM 11019 / LMG 10263 / NCTC 9343 / Onslow / VPI 2553 / EN-2).